Consider the following 204-residue polypeptide: Probable UMP-CMP kinase 1 (204 aa).

Residue glycine 31–threonine 36 coordinates ATP. Positions serine 51–valine 80 are NMP. A ribonucleoside 5'-phosphate is bound by residues arginine 57, arginine 78–valine 80, and glycine 105–arginine 108. A CMP-binding site is contributed by asparagine 112. Positions serine 143–aspartate 151 are LID. Arginine 144 is an ATP binding site. The a ribonucleoside 5'-phosphate site is built by arginine 148 and arginine 159. ATP is bound at residue lysine 187.

The protein belongs to the adenylate kinase family. UMP-CMP kinase subfamily. Monomer. It depends on Mg(2+) as a cofactor.

The protein localises to the cytoplasm. It localises to the nucleus. It carries out the reaction CMP + ATP = CDP + ADP. The enzyme catalyses dCMP + ATP = dCDP + ADP. It catalyses the reaction UMP + ATP = UDP + ADP. Catalyzes the phosphorylation of pyrimidine nucleoside monophosphates at the expense of ATP. Plays an important role in de novo pyrimidine nucleotide biosynthesis. Has preference for UMP and CMP as phosphate acceptors. In Arabidopsis thaliana (Mouse-ear cress), this protein is Probable UMP-CMP kinase 1 (UMK1).